The chain runs to 456 residues: Glutamate-gated chloride channel (456 aa).

A signal peptide spans 1-22 (MGSGHYFWAILYFASLCSASLA). The Extracellular portion of the chain corresponds to 23-245 (NNAKINFREK…VDLLFKREFS (223 aa)). R71, R90, and S154 together coordinate L-glutamate. A disulfide bridge connects residues C163 and C177. Residue S183 coordinates L-glutamate. A disulfide bond links C222 and C233. The helical transmembrane segment at 246 to 268 (YYLIQIYIPCCMLVIVSWVSFWL) threads the bilayer. Residues 269–273 (DQGAV) are Cytoplasmic-facing. Residues 274–295 (PARVSLGVTTLLTMATQTSGIN) traverse the membrane as a helical segment. The Extracellular portion of the chain corresponds to 296–302 (ASLPPVS). The chain crosses the membrane as a helical span at residues 303 to 323 (YTKAIDVWTGVCLTFVFGALL). Topologically, residues 324-426 (EFALVNYASR…RQCSRSKRID (103 aa)) are cytoplasmic. The helical transmembrane segment at 427-450 (VISRITFPLVFALFNLVYWSTYLF) threads the bilayer. Residues 451–456 (REEEDE) are Extracellular-facing.

It belongs to the ligand-gated ion channel (TC 1.A.9) family. Glutamate-gated chloride channel (TC 1.A.9.4) subfamily. As to quaternary structure, pentamer. Homomultimer. Expressed in the medulla layers (at protein level). Expressed in all major ON pathway medulla neurons (Mi1, Tm3, Mi4, and Mi9) and in OFF pathway neurons (Tm1, Tm2, Tm4, and Tm9).

It localises to the postsynaptic cell membrane. The protein localises to the cell membrane. Glutamate binding triggers a rapidly reversible current, while the anti-helmintic drug ivermectin triggers a permanently open channel configuration. Inhibited by picrotoxin. Functionally, glutamate-gated chloride channel subunit. Together with Gamma-aminobutyric acid receptor Rdl, plays an important role in the visual response by regulating the activity of ON/OFF-selective neurons. The protein is Glutamate-gated chloride channel (GluClalpha) of Drosophila melanogaster (Fruit fly).